A 337-amino-acid chain; its full sequence is Glyceraldehyde-3-phosphate dehydrogenase (337 aa).

Residues 13-14 (RI), aspartate 35, and arginine 80 each bind NAD(+). Residues 150–152 (SCT), threonine 181, 210–211 (TG), and arginine 233 contribute to the D-glyceraldehyde 3-phosphate site. The Nucleophile role is filled by cysteine 151. Asparagine 315 is an NAD(+) binding site.

Belongs to the glyceraldehyde-3-phosphate dehydrogenase family. As to quaternary structure, homotetramer.

The protein resides in the cytoplasm. It catalyses the reaction D-glyceraldehyde 3-phosphate + phosphate + NAD(+) = (2R)-3-phospho-glyceroyl phosphate + NADH + H(+). The protein operates within carbohydrate degradation; glycolysis; pyruvate from D-glyceraldehyde 3-phosphate: step 1/5. The chain is Glyceraldehyde-3-phosphate dehydrogenase (GPDA) from Colletotrichum lindemuthianum (Bean anthracnose fungus).